The chain runs to 255 residues: Small ribosomal subunit protein uS2 (255 aa).

The interval alanine 232–alanine 255 is disordered.

This sequence belongs to the universal ribosomal protein uS2 family.

In Sinorhizobium medicae (strain WSM419) (Ensifer medicae), this protein is Small ribosomal subunit protein uS2.